A 232-amino-acid polypeptide reads, in one-letter code: Large ribosomal subunit protein uL1 (232 aa).

Belongs to the universal ribosomal protein uL1 family. Part of the 50S ribosomal subunit.

In terms of biological role, binds directly to 23S rRNA. The L1 stalk is quite mobile in the ribosome, and is involved in E site tRNA release. Its function is as follows. Protein L1 is also a translational repressor protein, it controls the translation of the L11 operon by binding to its mRNA. In Burkholderia cenocepacia (strain ATCC BAA-245 / DSM 16553 / LMG 16656 / NCTC 13227 / J2315 / CF5610) (Burkholderia cepacia (strain J2315)), this protein is Large ribosomal subunit protein uL1.